The primary structure comprises 312 residues: Ornithine carbamoyltransferase, catabolic (312 aa).

Carbamoyl phosphate is bound by residues 57–60 (STRT), Gln84, Arg108, and 135–138 (HPTQ). Residues Asn167, Asp231, and 235 to 236 (SM) contribute to the L-ornithine site. A carbamoyl phosphate-binding site is contributed by 272–273 (CL).

The protein belongs to the aspartate/ornithine carbamoyltransferase superfamily. OTCase family.

The protein resides in the cytoplasm. It catalyses the reaction carbamoyl phosphate + L-ornithine = L-citrulline + phosphate + H(+). The protein operates within amino-acid degradation; L-arginine degradation via ADI pathway; carbamoyl phosphate from L-arginine: step 2/2. Functionally, reversibly catalyzes the transfer of the carbamoyl group from carbamoyl phosphate (CP) to the N(epsilon) atom of ornithine (ORN) to produce L-citrulline. The polypeptide is Ornithine carbamoyltransferase, catabolic (arcB) (Mycoplasma capricolum subsp. capripneumoniae).